The sequence spans 425 residues: Riboflavin biosynthesis protein RibBA (425 aa).

The segment at 1–204 is DHBP synthase; the sequence is MTRLDSVERA…IADLIEWRRK (204 aa). Residues 28 to 29, Asp33, 141 to 145, and Glu165 contribute to the D-ribulose 5-phosphate site; these read RE and RPGHT. Mg(2+) is bound at residue Glu29. Mg(2+) is bound at residue His144. The GTP cyclohydrolase II stretch occupies residues 205 to 425; it reads HEKHIERVAE…HLPGEFGGAL (221 aa). 259–263 serves as a coordination point for GTP; sequence RVHSE. Residues Cys264, Cys275, and Cys277 each contribute to the Zn(2+) site. GTP is bound by residues Gln280, 303-305, and Thr325; that span reads EGR. Asp337 (proton acceptor; for GTP cyclohydrolase activity) is an active-site residue. Arg339 acts as the Nucleophile; for GTP cyclohydrolase activity in catalysis. GTP is bound by residues Thr360 and Lys365.

In the N-terminal section; belongs to the DHBP synthase family. This sequence in the C-terminal section; belongs to the GTP cyclohydrolase II family. The cofactor is Mg(2+). Mn(2+) serves as cofactor. Requires Zn(2+) as cofactor.

It catalyses the reaction D-ribulose 5-phosphate = (2S)-2-hydroxy-3-oxobutyl phosphate + formate + H(+). It carries out the reaction GTP + 4 H2O = 2,5-diamino-6-hydroxy-4-(5-phosphoribosylamino)-pyrimidine + formate + 2 phosphate + 3 H(+). The protein operates within cofactor biosynthesis; riboflavin biosynthesis; 2-hydroxy-3-oxobutyl phosphate from D-ribulose 5-phosphate: step 1/1. It participates in cofactor biosynthesis; riboflavin biosynthesis; 5-amino-6-(D-ribitylamino)uracil from GTP: step 1/4. Functionally, catalyzes the conversion of D-ribulose 5-phosphate to formate and 3,4-dihydroxy-2-butanone 4-phosphate. Catalyzes the conversion of GTP to 2,5-diamino-6-ribosylamino-4(3H)-pyrimidinone 5'-phosphate (DARP), formate and pyrophosphate. This is Riboflavin biosynthesis protein RibBA from Mycobacterium ulcerans (strain Agy99).